The primary structure comprises 751 residues: NAD(P)H-quinone oxidoreductase subunit 5, chloroplastic (751 aa).

The next 16 helical transmembrane spans lie at Trp-9–Phe-29, Trp-40–Ile-60, Val-89–Ile-109, Phe-125–Ile-145, Ile-147–Thr-167, Gly-185–Phe-205, Asn-219–Ala-239, Thr-258–Ala-278, Leu-280–Ile-300, Leu-327–Ile-347, Ala-354–Ser-374, Thr-396–Ser-416, Trp-425–Tyr-445, Leu-543–Phe-563, Phe-599–Phe-619, and Ile-719–Phe-739.

The protein belongs to the complex I subunit 5 family. In terms of assembly, NDH is composed of at least 16 different subunits, 5 of which are encoded in the nucleus.

Its subcellular location is the plastid. The protein localises to the chloroplast thylakoid membrane. The enzyme catalyses a plastoquinone + NADH + (n+1) H(+)(in) = a plastoquinol + NAD(+) + n H(+)(out). The catalysed reaction is a plastoquinone + NADPH + (n+1) H(+)(in) = a plastoquinol + NADP(+) + n H(+)(out). In terms of biological role, NDH shuttles electrons from NAD(P)H:plastoquinone, via FMN and iron-sulfur (Fe-S) centers, to quinones in the photosynthetic chain and possibly in a chloroplast respiratory chain. The immediate electron acceptor for the enzyme in this species is believed to be plastoquinone. Couples the redox reaction to proton translocation, and thus conserves the redox energy in a proton gradient. The protein is NAD(P)H-quinone oxidoreductase subunit 5, chloroplastic (ndhF) of Fagopyrum esculentum subsp. ancestrale (Wild buckwheat).